Here is a 259-residue protein sequence, read N- to C-terminus: Indole-3-glycerol phosphate synthase (259 aa).

The protein belongs to the TrpC family.

It carries out the reaction 1-(2-carboxyphenylamino)-1-deoxy-D-ribulose 5-phosphate + H(+) = (1S,2R)-1-C-(indol-3-yl)glycerol 3-phosphate + CO2 + H2O. Its pathway is amino-acid biosynthesis; L-tryptophan biosynthesis; L-tryptophan from chorismate: step 4/5. This is Indole-3-glycerol phosphate synthase from Dehalococcoides mccartyi (strain ATCC BAA-2100 / JCM 16839 / KCTC 5957 / BAV1).